The primary structure comprises 509 residues: ATP synthase subunit alpha (509 aa).

An ATP-binding site is contributed by G169–T176.

It belongs to the ATPase alpha/beta chains family. In terms of assembly, F-type ATPases have 2 components, CF(1) - the catalytic core - and CF(0) - the membrane proton channel. CF(1) has five subunits: alpha(3), beta(3), gamma(1), delta(1), epsilon(1). CF(0) has three main subunits: a(1), b(2) and c(9-12). The alpha and beta chains form an alternating ring which encloses part of the gamma chain. CF(1) is attached to CF(0) by a central stalk formed by the gamma and epsilon chains, while a peripheral stalk is formed by the delta and b chains.

The protein localises to the cell inner membrane. It carries out the reaction ATP + H2O + 4 H(+)(in) = ADP + phosphate + 5 H(+)(out). Functionally, produces ATP from ADP in the presence of a proton gradient across the membrane. The alpha chain is a regulatory subunit. The chain is ATP synthase subunit alpha from Novosphingobium aromaticivorans (strain ATCC 700278 / DSM 12444 / CCUG 56034 / CIP 105152 / NBRC 16084 / F199).